Consider the following 196-residue polypeptide: MYFDSWTCEALENLPDYFKHILDEVAQINLYKMKENRKHFRKNDYGFEQAMVTYLAEKFIRNIRNLPNNLELGIAETLTKTKLESNKQPDFSLVKKDDGTVIEVMEVKTIIDNNFSWLREDVCKLRELDEVQNKFLLSINLYISRSAYTQTIKRLSKFMENDKNNSLSILCHGLLYRSRHGVQNFQLTYYYYLFKI.

This is an uncharacterized protein from Aquifex aeolicus (strain VF5).